The chain runs to 512 residues: Histidine ammonia-lyase (512 aa).

Residues 143–145 constitute a cross-link (5-imidazolinone (Cys-Gly)); that stretch reads CSG. Serine 144 is modified (2,3-didehydroalanine (Ser)).

Belongs to the PAL/histidase family. Contains an active site 4-methylidene-imidazol-5-one (MIO), which is formed autocatalytically by cyclization and dehydration of residues Cys-Ser-Gly.

The protein resides in the cytoplasm. The enzyme catalyses L-histidine = trans-urocanate + NH4(+). It functions in the pathway amino-acid degradation; L-histidine degradation into L-glutamate; N-formimidoyl-L-glutamate from L-histidine: step 1/3. In Streptomyces avermitilis (strain ATCC 31267 / DSM 46492 / JCM 5070 / NBRC 14893 / NCIMB 12804 / NRRL 8165 / MA-4680), this protein is Histidine ammonia-lyase.